The primary structure comprises 271 residues: Mannosyl-3-phosphoglycerate phosphatase (271 aa).

D13 serves as the catalytic Nucleophile. Mg(2+) is bound by residues D13, D15, and D214.

Belongs to the HAD-like hydrolase superfamily. MPGP family. Mg(2+) serves as cofactor.

It is found in the cytoplasm. It catalyses the reaction 2-O-(alpha-D-mannosyl)-3-phosphoglycerate + H2O = (2R)-2-O-(alpha-D-mannosyl)-glycerate + phosphate. This is Mannosyl-3-phosphoglycerate phosphatase from Escherichia coli O17:K52:H18 (strain UMN026 / ExPEC).